A 246-amino-acid chain; its full sequence is tRNA (guanine-N(1)-)-methyltransferase (246 aa).

S-adenosyl-L-methionine contacts are provided by residues Gly113 and 133-138 (IGDYVL).

It belongs to the RNA methyltransferase TrmD family. Homodimer.

It is found in the cytoplasm. It catalyses the reaction guanosine(37) in tRNA + S-adenosyl-L-methionine = N(1)-methylguanosine(37) in tRNA + S-adenosyl-L-homocysteine + H(+). Its function is as follows. Specifically methylates guanosine-37 in various tRNAs. The polypeptide is tRNA (guanine-N(1)-)-methyltransferase (Yersinia enterocolitica serotype O:8 / biotype 1B (strain NCTC 13174 / 8081)).